The following is a 395-amino-acid chain: NAD(P)H-quinone oxidoreductase subunit H, chloroplastic (395 aa).

Belongs to the complex I 49 kDa subunit family. NDH is composed of at least 16 different subunits, 5 of which are encoded in the nucleus.

Its subcellular location is the plastid. The protein resides in the chloroplast thylakoid membrane. It catalyses the reaction a plastoquinone + NADH + (n+1) H(+)(in) = a plastoquinol + NAD(+) + n H(+)(out). It carries out the reaction a plastoquinone + NADPH + (n+1) H(+)(in) = a plastoquinol + NADP(+) + n H(+)(out). Functionally, NDH shuttles electrons from NAD(P)H:plastoquinone, via FMN and iron-sulfur (Fe-S) centers, to quinones in the photosynthetic chain and possibly in a chloroplast respiratory chain. The immediate electron acceptor for the enzyme in this species is believed to be plastoquinone. Couples the redox reaction to proton translocation, and thus conserves the redox energy in a proton gradient. This is NAD(P)H-quinone oxidoreductase subunit H, chloroplastic from Staurastrum punctulatum (Green alga).